We begin with the raw amino-acid sequence, 553 residues long: PE cleavage protein A (553 aa).

In terms of domain architecture, PE spans Met-1 to Ala-92. The active site involves Asp-293.

This sequence belongs to the mycobacterial PE family. PGRS subfamily. Post-translationally, undergoes auto-proteolytic processing.

The protein resides in the secreted. It localises to the cell surface. Functionally, aspartic protease that processes the lipase LipY and other PE_PGRS proteins. Can also cleave itself. Cleaves LipY both inside the PE domain, before amino acid 98, and after amino acids 136 and 149. Involved in virulence. This chain is PE cleavage protein A, found in Mycobacterium marinum (strain ATCC BAA-535 / M).